Consider the following 109-residue polypeptide: Transcription initiation factor IIA subunit 2 (109 aa).

Belongs to the TFIIA subunit 2 family. As to quaternary structure, TFIIA is a heterodimer composed of the large toa1 and the small toa2 subunits.

It localises to the nucleus. Its subcellular location is the cytoplasm. In terms of biological role, TFIIA is a component of the transcription machinery of RNA polymerase II and plays an important role in transcriptional activation. TFIIA in a complex with tbp mediates transcriptional activity. This is Transcription initiation factor IIA subunit 2 (toa2) from Schizosaccharomyces pombe (strain 972 / ATCC 24843) (Fission yeast).